A 636-amino-acid chain; its full sequence is MPLYTTKKSNKLRASMFDEKPAKDYDPEAEPRDGDDDQSGSEADSDVERAETEHYVTVGKSKLRKAEAPTLGPEYSGTRVSRKALEESDEEDFEDEEEDDEEDDDDEDDLEDGESETGSEEFADPDTADLERDHIDEDAEISSDNALGEDDADWAEKFTFRGSSKPKTPAKTSKKDDLAVRIKKRPTAADFMSGSEDDEEEEDDEEDLEEDEEDEEDSEEGEQNGLFDMEAEETEDDEGEDDEEELDGALLSGSDDEEGDSEEDDEDDEEGSGDEDEDEDDEDEDEDEDDESGDDDEKNDVNAELRKIMAEDEKKIVSTFSKAAEADAQKGVAVRSQRRIFDSILNLRIRLQKALIAANTFNCVEKPENFKEKPYEAAEEAAVKLWNTIDSVRNSFLPEQVKAKAGEKRKRDAIELDTPAQEIWEVLEAVEGPANKYRRQVLDKWSTRVRSTTASMTKERRLAQSAGSQSLVSVLDDQLLSADRLIKKARTPRSCAPAQAAKKVEEDADIYDDADFYQLLLKELVDQRSSDSAAPGESVATVRWAALKEAKTRKQVDRKASKGRKLRFTVHEKLQNFMAPEDRRSWEEHAIDRFFGTLFGQKMVLKEDEAEAEAAEEDEEMGGVNVEEAGLKLFRS.

The tract at residues M1–A303 is disordered. The span at M16–R32 shows a compositional bias: basic and acidic residues. 6 stretches are compositionally biased toward acidic residues: residues D33–S45, E87–A128, D136–D153, S195–E222, M229–D247, and S254–K298.

Belongs to the AATF family.

Its subcellular location is the nucleus. The protein resides in the nucleolus. The protein is Protein bfr2 (bfr2) of Neurospora crassa (strain ATCC 24698 / 74-OR23-1A / CBS 708.71 / DSM 1257 / FGSC 987).